Here is a 455-residue protein sequence, read N- to C-terminus: Kynurenine 3-monooxygenase (455 aa).

Belongs to the aromatic-ring hydroxylase family. KMO subfamily. Requires FAD as cofactor.

It catalyses the reaction L-kynurenine + NADPH + O2 + H(+) = 3-hydroxy-L-kynurenine + NADP(+) + H2O. Its pathway is cofactor biosynthesis; NAD(+) biosynthesis; quinolinate from L-kynurenine: step 1/3. In terms of biological role, catalyzes the hydroxylation of L-kynurenine (L-Kyn) to form 3-hydroxy-L-kynurenine (L-3OHKyn). Required for synthesis of quinolinic acid. The polypeptide is Kynurenine 3-monooxygenase (Xanthomonas euvesicatoria pv. vesicatoria (strain 85-10) (Xanthomonas campestris pv. vesicatoria)).